The chain runs to 89 residues: Phosphocarrier protein HPr (89 aa).

The 88-residue stretch at 1–88 (MLQRDTTIIN…ALIANRFGEG (88 aa)) folds into the HPr domain. Histidine 15 (pros-phosphohistidine intermediate) is an active-site residue.

Belongs to the HPr family.

The protein resides in the cytoplasm. Its function is as follows. General (non sugar-specific) component of the phosphoenolpyruvate-dependent sugar phosphotransferase system (sugar PTS). This major carbohydrate active-transport system catalyzes the phosphorylation of incoming sugar substrates concomitantly with their translocation across the cell membrane. The phosphoryl group from phosphoenolpyruvate (PEP) is transferred to the phosphoryl carrier protein HPr by enzyme I. Phospho-HPr then transfers it to the PTS EIIA domain. This is Phosphocarrier protein HPr (phbH) from Cupriavidus necator (strain ATCC 17699 / DSM 428 / KCTC 22496 / NCIMB 10442 / H16 / Stanier 337) (Ralstonia eutropha).